A 289-amino-acid polypeptide reads, in one-letter code: Ketose 3-epimerase (289 aa).

Glu146 serves as the catalytic Proton donor/acceptor. Glu146 provides a ligand contact to Mn(2+). Residues Glu152 and Asp179–His182 contribute to the substrate site. Residues Asp179 and His205 each contribute to the Mn(2+) site. Position 211 (Arg211) interacts with substrate. Residue Glu240 is the Proton donor/acceptor of the active site. Glu240 contacts Mn(2+).

It belongs to the hyi family. In terms of assembly, homotetramer. Mg(2+) serves as cofactor. The cofactor is Mn(2+). Requires Co(2+) as cofactor.

It carries out the reaction L-ribulose = L-xylulose. The enzyme catalyses D-allulose = keto-D-fructose. It catalyses the reaction keto-L-tagatose = keto-L-sorbose. The catalysed reaction is D-ribulose = D-xylulose. It carries out the reaction L-allulose = keto-L-fructose. The enzyme catalyses keto-D-tagatose = keto-D-sorbose. Its function is as follows. Catalyzes the reversible C-3 epimerization of several ketoses. Shows the highest enzymatic activity for the epimerization of L-ribulose to L-xylulose. Is also able to convert D-allulose (also known as D-psicose) to D-fructose and, to a lesser extent, L-tagatose to L-sorbose, D-ribulose to D-xylulose, L-allulose to L-fructose and D-tagatose to D-sorbose. The protein is Ketose 3-epimerase of Arthrobacter globiformis.